Consider the following 251-residue polypeptide: Malonyl-[acyl-carrier protein] O-methyltransferase (251 aa).

Belongs to the methyltransferase superfamily.

The enzyme catalyses malonyl-[ACP] + S-adenosyl-L-methionine = malonyl-[ACP] methyl ester + S-adenosyl-L-homocysteine. Its pathway is cofactor biosynthesis; biotin biosynthesis. In terms of biological role, converts the free carboxyl group of a malonyl-thioester to its methyl ester by transfer of a methyl group from S-adenosyl-L-methionine (SAM). It allows to synthesize pimeloyl-ACP via the fatty acid synthetic pathway. This is Malonyl-[acyl-carrier protein] O-methyltransferase from Salmonella typhimurium (strain LT2 / SGSC1412 / ATCC 700720).